The following is a 311-amino-acid chain: Methionyl-tRNA formyltransferase (311 aa).

110–113 (SLLP) is a binding site for (6S)-5,6,7,8-tetrahydrofolate.

It belongs to the Fmt family.

The catalysed reaction is L-methionyl-tRNA(fMet) + (6R)-10-formyltetrahydrofolate = N-formyl-L-methionyl-tRNA(fMet) + (6S)-5,6,7,8-tetrahydrofolate + H(+). Functionally, attaches a formyl group to the free amino group of methionyl-tRNA(fMet). The formyl group appears to play a dual role in the initiator identity of N-formylmethionyl-tRNA by promoting its recognition by IF2 and preventing the misappropriation of this tRNA by the elongation apparatus. The protein is Methionyl-tRNA formyltransferase of Streptococcus pneumoniae (strain Taiwan19F-14).